Here is a 142-residue protein sequence, read N- to C-terminus: Large ribosomal subunit protein uL11 (142 aa).

It belongs to the universal ribosomal protein uL11 family. In terms of assembly, part of the ribosomal stalk of the 50S ribosomal subunit. Interacts with L10 and the large rRNA to form the base of the stalk. L10 forms an elongated spine to which L12 dimers bind in a sequential fashion forming a multimeric L10(L12)X complex. One or more lysine residues are methylated.

In terms of biological role, forms part of the ribosomal stalk which helps the ribosome interact with GTP-bound translation factors. This chain is Large ribosomal subunit protein uL11, found in Bradyrhizobium sp. (strain BTAi1 / ATCC BAA-1182).